We begin with the raw amino-acid sequence, 465 residues long: ATP synthase subunit beta 2 (465 aa).

An ATP-binding site is contributed by 148 to 155; it reads GGAGVGKT.

It belongs to the ATPase alpha/beta chains family. F-type ATPases have 2 components, CF(1) - the catalytic core - and CF(0) - the membrane proton channel. CF(1) has five subunits: alpha(3), beta(3), gamma(1), delta(1), epsilon(1). CF(0) has three main subunits: a(1), b(2) and c(9-12). The alpha and beta chains form an alternating ring which encloses part of the gamma chain. CF(1) is attached to CF(0) by a central stalk formed by the gamma and epsilon chains, while a peripheral stalk is formed by the delta and b chains.

Its subcellular location is the cell inner membrane. The enzyme catalyses ATP + H2O + 4 H(+)(in) = ADP + phosphate + 5 H(+)(out). In terms of biological role, produces ATP from ADP in the presence of a proton gradient across the membrane. The catalytic sites are hosted primarily by the beta subunits. This is ATP synthase subunit beta 2 from Psychromonas ingrahamii (strain DSM 17664 / CCUG 51855 / 37).